The primary structure comprises 270 residues: Tetraspanin-2 (270 aa).

Residues M1–T8 are Cytoplasmic-facing. A helical transmembrane segment spans residues A9 to L29. Over A30–R42 the chain is Extracellular. A helical membrane pass occupies residues W43–A63. Residues Y64 to Y74 lie on the Cytoplasmic side of the membrane. The chain crosses the membrane as a helical span at residues L75–V95. Residues T96–N232 are Extracellular-facing. Residues L233–F253 form a helical membrane-spanning segment. Topologically, residues R254–V270 are cytoplasmic.

The protein belongs to the tetraspanin (TM4SF) family.

It localises to the membrane. Its function is as follows. May be involved in the regulation of cell differentiation. The polypeptide is Tetraspanin-2 (TET2) (Arabidopsis thaliana (Mouse-ear cress)).